Reading from the N-terminus, the 157-residue chain is Probable succinate transporter subunit YjjB (157 aa).

The next 4 helical transmembrane spans lie at 8–28 (LALA…AMVF), 50–70 (MILM…SMLV), 87–107 (VFTV…TAMI), and 129–149 (FLTA…PGLW).

It belongs to the ThrE exporter (TC 2.A.79) family. As to quaternary structure, the transporter is composed of YjjB and YjjP.

It localises to the cell inner membrane. Functionally, involved in succinate export with YjjP. Both proteins are required for export. In Escherichia coli O127:H6 (strain E2348/69 / EPEC), this protein is Probable succinate transporter subunit YjjB.